The primary structure comprises 255 residues: Type III pantothenate kinase (255 aa).

6–13 provides a ligand contact to ATP; the sequence is DIGNTTSE. Substrate is bound by residues Tyr100 and 107–110; that span reads GIDR. Asp109 (proton acceptor) is an active-site residue. Asp129 is a binding site for K(+). Position 132 (Thr132) interacts with ATP. Thr184 provides a ligand contact to substrate.

Belongs to the type III pantothenate kinase family. Homodimer. The cofactor is NH4(+). It depends on K(+) as a cofactor.

Its subcellular location is the cytoplasm. The enzyme catalyses (R)-pantothenate + ATP = (R)-4'-phosphopantothenate + ADP + H(+). It functions in the pathway cofactor biosynthesis; coenzyme A biosynthesis; CoA from (R)-pantothenate: step 1/5. Its function is as follows. Catalyzes the phosphorylation of pantothenate (Pan), the first step in CoA biosynthesis. The chain is Type III pantothenate kinase from Persephonella marina (strain DSM 14350 / EX-H1).